A 717-amino-acid polypeptide reads, in one-letter code: Polyribonucleotide nucleotidyltransferase (717 aa).

2 residues coordinate Mg(2+): Asp-488 and Asp-494. Residues Pro-555 to Ile-614 enclose the KH domain. Residues Gly-624–Lys-692 form the S1 motif domain.

This sequence belongs to the polyribonucleotide nucleotidyltransferase family. It depends on Mg(2+) as a cofactor.

It localises to the cytoplasm. It catalyses the reaction RNA(n+1) + phosphate = RNA(n) + a ribonucleoside 5'-diphosphate. In terms of biological role, involved in mRNA degradation. Catalyzes the phosphorolysis of single-stranded polyribonucleotides processively in the 3'- to 5'-direction. This is Polyribonucleotide nucleotidyltransferase from Rhizobium meliloti (strain 1021) (Ensifer meliloti).